Here is a 756-residue protein sequence, read N- to C-terminus: 1,4-alpha-glucan branching enzyme GlgB (756 aa).

Aspartate 431 acts as the Nucleophile in catalysis. Glutamate 484 functions as the Proton donor in the catalytic mechanism.

This sequence belongs to the glycosyl hydrolase 13 family. GlgB subfamily. Monomer.

The enzyme catalyses Transfers a segment of a (1-&gt;4)-alpha-D-glucan chain to a primary hydroxy group in a similar glucan chain.. It participates in glycan biosynthesis; glycogen biosynthesis. In terms of biological role, catalyzes the formation of the alpha-1,6-glucosidic linkages in glycogen by scission of a 1,4-alpha-linked oligosaccharide from growing alpha-1,4-glucan chains and the subsequent attachment of the oligosaccharide to the alpha-1,6 position. This chain is 1,4-alpha-glucan branching enzyme GlgB, found in Prochlorococcus marinus (strain MIT 9303).